A 272-amino-acid chain; its full sequence is Homeobox protein SIX3 (272 aa).

The segment at residues 169–228 (GEQKTHCFKERTRGLLREWYLQDPYPNPGKKRELAHATGLTPTQVGNWFKNRRQRDRAAA) is a DNA-binding region (homeobox). The segment at 244–272 (CTLSGGDSSERADGDTFLSVTDSDSDLDV) is disordered.

It belongs to the SIX/Sine oculis homeobox family. Interacts with GMNN.

The protein localises to the nucleus. Functionally, transcriptional regulator which can act as both a transcriptional repressor and activator by binding a ATTA homeodomain core recognition sequence on these target genes. During forebrain development represses WNT1 expression allowing zona limitans intrathalamica formation and thereby ensuring proper anterio-posterior patterning of the diencephalon and formation of the rostral diencephalon. Acts as a direct upstream activator of SHH expression in the rostral diencephalon ventral midline and that in turn SHH maintains its expression. In addition, Six3 activity is required for the formation of the telencephalon. During postnatal stages of brain development is necessary for ependymal cell maturation by promoting the maturation of radial glia into ependymal cells through regulation of neuroblast proliferation and migration. Acts on the proliferation and differentiation of neural progenitor cells through activating transcription of CCND1 and CCND2. During early lens formation plays a role in lens induction and specification by activating directly PAX6 in the presumptive lens ectoderm. In turn PAX6 activates SIX3 resulting in activation of PDGFRA and CCND1 promoting cell proliferation. Also is required for the neuroretina development by directly suppressing WNT8B expression in the anterior neural plate territory. Its action during retina development and lens morphogenesis is AES and TLE4-dependent manner. Furthermore, during eye development regulates several genes expression. Before and during early lens development represses the CRYGF promoter by binding a SIX repressor element. Directly activates RHO transcription, or cooperates with CRX or NRL. Six3 also functions in the formation of the proximodistal axis of the optic cup, and promotes the formation of optic vesicles-like structures. During pituitary development, acts in parallel or alternatively with HESX1 to control cell proliferation through Wnt/beta-catenin pathway. Plays a role in eye development by suppressing WNT1 expression and in dorsal-ventral patterning by repressing BMP signaling pathway. The polypeptide is Homeobox protein SIX3 (six3) (Oryzias latipes (Japanese rice fish)).